Here is a 452-residue protein sequence, read N- to C-terminus: Proline--tRNA ligase (452 aa).

It belongs to the class-II aminoacyl-tRNA synthetase family. ProS type 2 subfamily. As to quaternary structure, homodimer.

Its subcellular location is the cytoplasm. The enzyme catalyses tRNA(Pro) + L-proline + ATP = L-prolyl-tRNA(Pro) + AMP + diphosphate. In terms of biological role, catalyzes the attachment of proline to tRNA(Pro) in a two-step reaction: proline is first activated by ATP to form Pro-AMP and then transferred to the acceptor end of tRNA(Pro). The polypeptide is Proline--tRNA ligase (Jannaschia sp. (strain CCS1)).